The sequence spans 394 residues: Protein-glutamate methylesterase/protein-glutamine glutaminase (394 aa).

The segment at 1-24 is disordered; it reads MSDGFGRPPPPAPAGHPTGAAGGD. A compositionally biased stretch (low complexity) spans 15-24; sequence GHPTGAAGGD. Positions 27–145 constitute a Response regulatory domain; that stretch reads RVMVVDDSAV…EIGGADAFKR (119 aa). 4-aspartylphosphate is present on Asp-78. One can recognise a CheB-type methylesterase domain in the interval 191 to 393; it reads PAPAVGSVGQ…PYIRKFASRA (203 aa). Active-site residues include Ser-211, His-238, and Asp-335.

This sequence belongs to the CheB family. In terms of processing, phosphorylated by CheA. Phosphorylation of the N-terminal regulatory domain activates the methylesterase activity.

The protein localises to the cytoplasm. It catalyses the reaction [protein]-L-glutamate 5-O-methyl ester + H2O = L-glutamyl-[protein] + methanol + H(+). The enzyme catalyses L-glutaminyl-[protein] + H2O = L-glutamyl-[protein] + NH4(+). Functionally, involved in chemotaxis. Part of a chemotaxis signal transduction system that modulates chemotaxis in response to various stimuli. Catalyzes the demethylation of specific methylglutamate residues introduced into the chemoreceptors (methyl-accepting chemotaxis proteins or MCP) by CheR. Also mediates the irreversible deamidation of specific glutamine residues to glutamic acid. The polypeptide is Protein-glutamate methylesterase/protein-glutamine glutaminase (Azospirillum brasilense).